Reading from the N-terminus, the 323-residue chain is Probable inactive poly [ADP-ribose] polymerase SRO2 (323 aa).

One can recognise a PARP catalytic domain in the interval 31 to 257 (SSVSHAGSSF…FASRPSSPWV (227 aa)). An RST domain is found at 250-321 (SRPSSPWVSF…IKNHKNRNKV (72 aa)).

Interacts with STO.

The protein resides in the nucleus. Probable inactive ADP-ribosyltransferase that may be involved in stress and developmental responses. In Arabidopsis thaliana (Mouse-ear cress), this protein is Probable inactive poly [ADP-ribose] polymerase SRO2 (SRO2).